A 38-amino-acid chain; its full sequence is Putative ORF10 protein (38 aa).

In terms of assembly, binds host ZYG11B. This would not play any role in SARS-CoV-2 infection.

This chain is Putative ORF10 protein, found in Severe acute respiratory syndrome coronavirus 2 (2019-nCoV).